The chain runs to 676 residues: Rho guanine nucleotide exchange factor 37 (676 aa).

The segment at 1–26 is disordered; that stretch reads MADFETDEASSKSESPEQEGQGSEDK. One can recognise a DH domain in the interval 30 to 213; sequence HQRLAIRELI…QDVNSNINEY (184 aa). Residues 254 to 455 enclose the BAR domain; that stretch reads LKQEAGLVPR…LPHRHVSEPD (202 aa). SH3 domains lie at 506–569 and 603–666; these read GPGK…LYHP and PTMS…RTPS. Disordered regions lie at residues 568–601 and 657–676; these read HPIN…SVPT and PSNF…NLPS.

Functionally, may act as a guanine nucleotide exchange factor (GEF). The protein is Rho guanine nucleotide exchange factor 37 (Arhgef37) of Rattus norvegicus (Rat).